The primary structure comprises 175 residues: Large ribosomal subunit protein uL10 (175 aa).

This sequence belongs to the universal ribosomal protein uL10 family. As to quaternary structure, part of the ribosomal stalk of the 50S ribosomal subunit. The N-terminus interacts with L11 and the large rRNA to form the base of the stalk. The C-terminus forms an elongated spine to which L12 dimers bind in a sequential fashion forming a multimeric L10(L12)X complex.

Functionally, forms part of the ribosomal stalk, playing a central role in the interaction of the ribosome with GTP-bound translation factors. The protein is Large ribosomal subunit protein uL10 of Prochlorococcus marinus subsp. pastoris (strain CCMP1986 / NIES-2087 / MED4).